Here is a 111-residue protein sequence, read N- to C-terminus: UPF0060 membrane protein CPR_1507 (111 aa).

Helical transmembrane passes span 7-27 (IFYF…IWLW), 33-53 (SLIY…IPTL), 60-80 (FGRV…LCGW), and 85-105 (IIPD…VLII).

Belongs to the UPF0060 family.

The protein localises to the cell membrane. This Clostridium perfringens (strain SM101 / Type A) protein is UPF0060 membrane protein CPR_1507.